The sequence spans 296 residues: Probable porphobilinogen deaminase (296 aa).

Cys-241 is modified (S-(dipyrrolylmethanemethyl)cysteine).

It belongs to the HMBS family. Requires dipyrromethane as cofactor.

The catalysed reaction is 4 porphobilinogen + H2O = hydroxymethylbilane + 4 NH4(+). It functions in the pathway porphyrin-containing compound metabolism; protoporphyrin-IX biosynthesis; coproporphyrinogen-III from 5-aminolevulinate: step 2/4. In terms of biological role, tetrapolymerization of the monopyrrole PBG into the hydroxymethylbilane pre-uroporphyrinogen in several discrete steps. The sequence is that of Probable porphobilinogen deaminase from Pyrobaculum neutrophilum (strain DSM 2338 / JCM 9278 / NBRC 100436 / V24Sta) (Thermoproteus neutrophilus).